The following is a 195-amino-acid chain: Imidazoleglycerol-phosphate dehydratase (195 aa).

This sequence belongs to the imidazoleglycerol-phosphate dehydratase family.

The protein localises to the cytoplasm. It carries out the reaction D-erythro-1-(imidazol-4-yl)glycerol 3-phosphate = 3-(imidazol-4-yl)-2-oxopropyl phosphate + H2O. The protein operates within amino-acid biosynthesis; L-histidine biosynthesis; L-histidine from 5-phospho-alpha-D-ribose 1-diphosphate: step 6/9. The polypeptide is Imidazoleglycerol-phosphate dehydratase (Parafrankia sp. (strain EAN1pec)).